The sequence spans 29 residues: Cyclotide cter-N (29 aa).

The segment at residues 1-29 (GSAFCGETCVLGTCYTPDCSCTALVCLKN) is a cross-link (cyclopeptide (Gly-Asn)). Disulfide bonds link Cys5-Cys19, Cys9-Cys21, and Cys14-Cys26.

This is a cyclic peptide.

It is found in the secreted. Its function is as follows. Probably participates in a plant defense mechanism. This chain is Cyclotide cter-N, found in Clitoria ternatea (Butterfly pea).